Reading from the N-terminus, the 142-residue chain is Ig heavy chain V region IR2 (142 aa).

An N-terminal signal peptide occupies residues 1-19 (MDLRLTYVFIVAILKGVLC). The 114-residue stretch at 20-133 (EVKLEESGGG…YSENWFVYWG (114 aa)) folds into the Ig-like domain.

This Rattus norvegicus (Rat) protein is Ig heavy chain V region IR2.